The primary structure comprises 60 residues: Metallothionein A (60 aa).

A beta region spans residues 1–28 (MDPCECSKSGNCNCGGSCTCTNCSCKSC). A divalent metal cation contacts are provided by cysteine 4, cysteine 6, cysteine 12, cysteine 14, cysteine 18, cysteine 20, cysteine 23, cysteine 25, cysteine 28, cysteine 32, cysteine 33, cysteine 35, cysteine 36, cysteine 40, cysteine 43, cysteine 47, cysteine 49, cysteine 54, cysteine 58, and cysteine 59. The alpha stretch occupies residues 29-60 (KKSCCPCCPSGCTKCASGCVCIGKTCDTSCCQ).

It belongs to the metallothionein superfamily. Type 1 family.

Functionally, metallothioneins have a high content of cysteine residues that bind various heavy metals. This chain is Metallothionein A (mta), found in Chaenocephalus aceratus (Blackfin icefish).